The primary structure comprises 308 residues: Protein Bel-1 (308 aa).

A DNA-binding region spans residues 94 to 203 (SKSTCKRLIL…KGTRLPKRRC (110 aa)). The segment at 200-242 (KRRCNPSRRYETFREHPPTRKRRSKEGIPTDQQPSTSNGDPMA) is disordered. Over residues 207 to 217 (RRYETFREHPP) the composition is skewed to basic and acidic residues. The Nuclear localization signal motif lies at 217-226 (PTRKRRSKEG). The tract at residues 228–304 (PTDQQPSTSN…PLGSSEDQLL (77 aa)) is transactivation domain. The span at 229–238 (TDQQPSTSNG) shows a compositional bias: polar residues.

In terms of assembly, homodimer or homomultimer. Forms complexes with the host nuclear factors NFIA, NFIB, NFIC or NFIX.

The protein resides in the host nucleus. Its function is as follows. Transcriptional transactivator that activates the viral internal promoter (IP), thereby enhancing its own expression. This transactivation is repressed by nuclear factor I. Also transactivates the long terminal repeat (LTR) promoter, thereby inducing structural gene expression, initiating the late phase of infection. It is therefore a key regulator of viral gene expression. It directly binds to and activates DNA target sites of viral promoters and those of distinct cellular genes. Required for viral replication. The sequence is that of Protein Bel-1 (bel1) from Simian foamy virus type 1 (SFVmac).